Consider the following 76-residue polypeptide: Conotoxin Vc6.3 (76 aa).

The first 22 residues, 1 to 22, serve as a signal peptide directing secretion; the sequence is MKLTCVMIVAVLFLTANTFATA. A propeptide spanning residues 23–50 is cleaved from the precursor; the sequence is DDPRNGLRDLFSIAHHEMKNPEASKLNE. 3 disulfide bridges follow: cysteine 52/cysteine 66, cysteine 59/cysteine 70, and cysteine 67/cysteine 75.

It belongs to the conotoxin O1 superfamily. As to expression, expressed by the venom duct.

The protein localises to the secreted. The polypeptide is Conotoxin Vc6.3 (Conus victoriae (Queen Victoria cone)).